The primary structure comprises 223 residues: Endonuclease V (223 aa).

2 residues coordinate Mg(2+): aspartate 35 and aspartate 103.

Belongs to the endonuclease V family. The cofactor is Mg(2+).

It localises to the cytoplasm. It catalyses the reaction Endonucleolytic cleavage at apurinic or apyrimidinic sites to products with a 5'-phosphate.. In terms of biological role, DNA repair enzyme involved in the repair of deaminated bases. Selectively cleaves double-stranded DNA at the second phosphodiester bond 3' to a deoxyinosine leaving behind the intact lesion on the nicked DNA. The polypeptide is Endonuclease V (Shigella dysenteriae serotype 1 (strain Sd197)).